A 263-amino-acid chain; its full sequence is Hydroxyethylthiazole kinase 1 (263 aa).

Met-42 is a substrate binding site. ATP is bound by residues Lys-118 and Thr-164. Gly-191 contacts substrate.

It belongs to the Thz kinase family. Mg(2+) is required as a cofactor.

The enzyme catalyses 5-(2-hydroxyethyl)-4-methylthiazole + ATP = 4-methyl-5-(2-phosphooxyethyl)-thiazole + ADP + H(+). Its pathway is cofactor biosynthesis; thiamine diphosphate biosynthesis; 4-methyl-5-(2-phosphoethyl)-thiazole from 5-(2-hydroxyethyl)-4-methylthiazole: step 1/1. Its function is as follows. Catalyzes the phosphorylation of the hydroxyl group of 4-methyl-5-beta-hydroxyethylthiazole (THZ). The polypeptide is Hydroxyethylthiazole kinase 1 (Clostridium botulinum (strain Kyoto / Type A2)).